The chain runs to 290 residues: ATP synthase gamma chain (290 aa).

Belongs to the ATPase gamma chain family. F-type ATPases have 2 components, CF(1) - the catalytic core - and CF(0) - the membrane proton channel. CF(1) has five subunits: alpha(3), beta(3), gamma(1), delta(1), epsilon(1). CF(0) has three main subunits: a, b and c.

It is found in the cell membrane. Functionally, produces ATP from ADP in the presence of a proton gradient across the membrane. The gamma chain is believed to be important in regulating ATPase activity and the flow of protons through the CF(0) complex. This chain is ATP synthase gamma chain, found in Roseiflexus castenholzii (strain DSM 13941 / HLO8).